Consider the following 37-residue polypeptide: Potassium channel toxin alpha-KTx 4.3 (37 aa).

3 disulfides stabilise this stretch: Cys7–Cys28, Cys13–Cys33, and Cys17–Cys35. The tract at residues 26–33 (GKCMNGKC) is interaction with Ca(2+)-activated K(+) channels.

In terms of tissue distribution, expressed by the venom gland.

It localises to the secreted. In terms of biological role, blocks reversibly Shaker B potassium-channels. The protein is Potassium channel toxin alpha-KTx 4.3 of Tityus discrepans (Venezuelan scorpion).